A 436-amino-acid chain; its full sequence is Phosphoribosylamine--glycine ligase (436 aa).

An ATP-grasp domain is found at 106–318 (RKLFEDYRIP…MLEICEGIVD (213 aa)). Position 133–196 (133–196 (MEDFDSEAVV…EERVVGEEFT (64 aa))) interacts with ATP. Residues Gln276, Glu288, and Asn290 each coordinate Mg(2+). 3 residues coordinate Mn(2+): Gln276, Glu288, and Asn290.

The protein belongs to the GARS family. Mg(2+) serves as cofactor. Requires Mn(2+) as cofactor.

It catalyses the reaction 5-phospho-beta-D-ribosylamine + glycine + ATP = N(1)-(5-phospho-beta-D-ribosyl)glycinamide + ADP + phosphate + H(+). Its pathway is purine metabolism; IMP biosynthesis via de novo pathway; N(1)-(5-phospho-D-ribosyl)glycinamide from 5-phospho-alpha-D-ribose 1-diphosphate: step 2/2. This chain is Phosphoribosylamine--glycine ligase, found in Methanothermobacter thermautotrophicus (strain ATCC 29096 / DSM 1053 / JCM 10044 / NBRC 100330 / Delta H) (Methanobacterium thermoautotrophicum).